Consider the following 652-residue polypeptide: Chaperone protein HtpG (652 aa).

The segment at M1–R351 is a; substrate-binding. Residues E352–R568 are b. The tract at residues M569–L652 is c.

It belongs to the heat shock protein 90 family. In terms of assembly, homodimer.

Its subcellular location is the cytoplasm. In terms of biological role, molecular chaperone. Has ATPase activity. This chain is Chaperone protein HtpG, found in Nocardia farcinica (strain IFM 10152).